Consider the following 355-residue polypeptide: Heat-inducible transcription repressor HrcA (355 aa).

The protein belongs to the HrcA family.

Negative regulator of class I heat shock genes (grpE-dnaK-dnaJ and groELS operons). Prevents heat-shock induction of these operons. The chain is Heat-inducible transcription repressor HrcA from Nitratidesulfovibrio vulgaris (strain DSM 19637 / Miyazaki F) (Desulfovibrio vulgaris).